Here is an 816-residue protein sequence, read N- to C-terminus: Probable E3 ubiquitin-protein ligase hulA (816 aa).

Residues 1 to 112 enclose the C2 domain; sequence MGSNLPAQPN…QMGGDEMLTR (112 aa). Disordered regions lie at residues 134–238 and 253–353; these read NLST…WERR and RTTT…YFVD. 4 stretches are compositionally biased toward polar residues: residues 151-168, 177-202, 217-226, and 253-270; these read MQPS…ASTP, ADPT…STIV, SRTNLSSFED, and RTTT…QTSR. The WW 1 domain occupies 229 to 262; the sequence is GRLPAGWERREDNLGRTYYVDHNTRTTTWTRPSN. The span at 279 to 294 shows a compositional bias: basic and acidic residues; that stretch reads LERRAHQSRMLPEDRT. Polar residues predominate over residues 295–309; the sequence is GASSPNLQENQQQAQ. The span at 310–333 shows a compositional bias: low complexity; it reads TPPAGGSASAVSMMATGATTAGTG. WW domains are found at residues 333–366 and 393–426; these read GELP…DPRR and GPLP…DPRL. The 335-residue stretch at 482–816 folds into the HECT domain; sequence SASDLKKRLM…VEETLGFGQE (335 aa). The Glycyl thioester intermediate role is filled by cysteine 784.

The protein belongs to the RSP5/NEDD4 family. As to quaternary structure, interacts with creD.

It is found in the cytoplasm. It carries out the reaction S-ubiquitinyl-[E2 ubiquitin-conjugating enzyme]-L-cysteine + [acceptor protein]-L-lysine = [E2 ubiquitin-conjugating enzyme]-L-cysteine + N(6)-ubiquitinyl-[acceptor protein]-L-lysine.. It functions in the pathway protein modification; protein ubiquitination. In terms of biological role, E3 ubiquitin-protein ligase which accepts ubiquitin from an E2 ubiquitin-conjugating enzyme in the form of a thioester and then directly transfers the ubiquitin to targeted substrates. Probably involved in the regulatory network controlling carbon source utilization. The sequence is that of Probable E3 ubiquitin-protein ligase hulA (hulA) from Aspergillus oryzae (strain ATCC 42149 / RIB 40) (Yellow koji mold).